A 277-amino-acid chain; its full sequence is 2-dehydro-3-deoxyphosphooctonate aldolase (277 aa).

The protein belongs to the KdsA family.

It localises to the cytoplasm. It carries out the reaction D-arabinose 5-phosphate + phosphoenolpyruvate + H2O = 3-deoxy-alpha-D-manno-2-octulosonate-8-phosphate + phosphate. It participates in carbohydrate biosynthesis; 3-deoxy-D-manno-octulosonate biosynthesis; 3-deoxy-D-manno-octulosonate from D-ribulose 5-phosphate: step 2/3. It functions in the pathway bacterial outer membrane biogenesis; lipopolysaccharide biosynthesis. The sequence is that of 2-dehydro-3-deoxyphosphooctonate aldolase from Brucella melitensis biotype 2 (strain ATCC 23457).